A 173-amino-acid polypeptide reads, in one-letter code: NADH-quinone oxidoreductase subunit B (173 aa).

Positions 52, 53, 117, and 147 each coordinate [4Fe-4S] cluster.

The protein belongs to the complex I 20 kDa subunit family. In terms of assembly, NDH-1 is composed of 14 different subunits. Subunits NuoB, C, D, E, F, and G constitute the peripheral sector of the complex. [4Fe-4S] cluster serves as cofactor.

Its subcellular location is the cell inner membrane. It catalyses the reaction a quinone + NADH + 5 H(+)(in) = a quinol + NAD(+) + 4 H(+)(out). NDH-1 shuttles electrons from NADH, via FMN and iron-sulfur (Fe-S) centers, to quinones in the respiratory chain. Couples the redox reaction to proton translocation (for every two electrons transferred, four hydrogen ions are translocated across the cytoplasmic membrane), and thus conserves the redox energy in a proton gradient. The chain is NADH-quinone oxidoreductase subunit B from Pelagibacter ubique (strain HTCC1062).